Here is a 502-residue protein sequence, read N- to C-terminus: Glycerol kinase (502 aa).

ADP is bound at residue Thr14. The ATP site is built by Thr14, Thr15, and Ser16. Residue Thr14 participates in sn-glycerol 3-phosphate binding. Position 18 (Arg18) interacts with ADP. 4 residues coordinate sn-glycerol 3-phosphate: Arg84, Glu85, Tyr136, and Asp246. Glycerol-binding residues include Arg84, Glu85, Tyr136, Asp246, and Gln247. Residues Thr268 and Gly311 each contribute to the ADP site. Residues Thr268, Gly311, Gln315, and Gly412 each contribute to the ATP site. Residues Gly412 and Asn416 each coordinate ADP.

It belongs to the FGGY kinase family. Homotetramer and homodimer (in equilibrium). Heterodimer with EIIA-Glc. Binds 1 zinc ion per glycerol kinase EIIA-Glc dimer. The zinc ion is important for dimerization.

The catalysed reaction is glycerol + ATP = sn-glycerol 3-phosphate + ADP + H(+). Its pathway is polyol metabolism; glycerol degradation via glycerol kinase pathway; sn-glycerol 3-phosphate from glycerol: step 1/1. Activity of this regulatory enzyme is affected by several metabolites. Allosterically and non-competitively inhibited by fructose 1,6-bisphosphate (FBP) and unphosphorylated phosphocarrier protein EIIA-Glc (III-Glc), an integral component of the bacterial phosphotransferase (PTS) system. In terms of biological role, key enzyme in the regulation of glycerol uptake and metabolism. Catalyzes the phosphorylation of glycerol to yield sn-glycerol 3-phosphate. The polypeptide is Glycerol kinase (Enterobacter sp. (strain 638)).